We begin with the raw amino-acid sequence, 245 residues long: Small ribosomal subunit protein uS3 (245 aa).

In terms of domain architecture, KH type-2 spans 38–106; that stretch reads IRKYLNTRLA…EVQINIFEIK (69 aa). Residues 225-245 are disordered; sequence YEGSGDKSVKRRKRNGIKKNE. Residues 233–245 show a composition bias toward basic residues; that stretch reads VKRRKRNGIKKNE.

Belongs to the universal ribosomal protein uS3 family. In terms of assembly, part of the 30S ribosomal subunit. Forms a tight complex with proteins S10 and S14.

Binds the lower part of the 30S subunit head. Binds mRNA in the 70S ribosome, positioning it for translation. In Azobacteroides pseudotrichonymphae genomovar. CFP2, this protein is Small ribosomal subunit protein uS3.